Here is a 132-residue protein sequence, read N- to C-terminus: tRNA (cytidine(56)-2'-O)-methyltransferase (132 aa).

S-adenosyl-L-methionine-binding positions include leucine 35, 65-69 (GSEKV), and 83-90 (IGNQPHSE).

Belongs to the aTrm56 family. Homodimer.

The protein localises to the cytoplasm. It carries out the reaction cytidine(56) in tRNA + S-adenosyl-L-methionine = 2'-O-methylcytidine(56) in tRNA + S-adenosyl-L-homocysteine + H(+). In terms of biological role, specifically catalyzes the AdoMet-dependent 2'-O-ribose methylation of cytidine at position 56 in tRNAs. The polypeptide is tRNA (cytidine(56)-2'-O)-methyltransferase (Sulfolobus acidocaldarius (strain ATCC 33909 / DSM 639 / JCM 8929 / NBRC 15157 / NCIMB 11770)).